A 194-amino-acid polypeptide reads, in one-letter code: MKIWTSEHVFDHPWETVTTAAMQKYPNPMNPSVVGVDVLDRHIDPSGKLHSHRLLSTEWGLPSIVKSLIGAARTKTYVQEHSVVDPVEKTMELKSTNISFTNMVSVDERLIYKPHPQDPEKTVLTQEAIITVKGVSLSSYLEGLMASTISSNASKGREAMEWVIHKLNAEIEELTASARGTIRTPMAAAAFAEK.

The region spanning 1–172 (MKIWTSEHVF…VIHKLNAEIE (172 aa)) is the PRELI/MSF1 domain. Serine 46 and serine 51 each carry phosphoserine.

Belongs to the slowmo family.

The chain is PRELI domain containing protein 3B (PRELID3B) from Homo sapiens (Human).